A 101-amino-acid polypeptide reads, in one-letter code: Apolipoprotein C-II (101 aa).

The first 22 residues, 1–22 (MGTRYFLVGFLILLVLGFEAQG), serve as a signal peptide directing secretion. Residues 66 to 74 (TVDEKIRDI) form a lipid binding region. Positions 78–101 (STAAVTTYAGIITDQVFSILSGED) are lipoprotein lipase cofactor.

It belongs to the apolipoprotein C2 family. In terms of processing, proapolipoprotein C-II is synthesized as a sialic acid containing glycoprotein which is subsequently desialylated prior to its proteolytic processing. Proapolipoprotein C-II, the major form found in plasma undergoes proteolytic cleavage of its N-terminal hexapeptide to generate apolipoprotein C-II, which occurs as the minor form in plasma.

The protein resides in the secreted. Its function is as follows. Component of chylomicrons, very low-density lipoproteins (VLDL), low-density lipoproteins (LDL), and high-density lipoproteins (HDL) in plasma. Plays an important role in lipoprotein metabolism as an activator of lipoprotein lipase. Both proapolipoprotein C-II and apolipoprotein C-II can activate lipoprotein lipase. This chain is Apolipoprotein C-II (APOC2), found in Capra hircus aegagrus (Wild goat).